A 158-amino-acid polypeptide reads, in one-letter code: Transcriptional repressor NrdR (158 aa).

A zinc finger lies at 3-34; sequence CPYCGYPDSKVIDSRPTDDNTSIRRRRECLKC. In terms of domain architecture, ATP-cone spans 49-139; it reads ILVIKKDNRR…VYRQFKDINT (91 aa).

It belongs to the NrdR family. It depends on Zn(2+) as a cofactor.

Negatively regulates transcription of bacterial ribonucleotide reductase nrd genes and operons by binding to NrdR-boxes. The polypeptide is Transcriptional repressor NrdR (Thermoanaerobacter pseudethanolicus (strain ATCC 33223 / 39E) (Clostridium thermohydrosulfuricum)).